The chain runs to 310 residues: Prohibitin-2 (310 aa).

The helical; Signal-anchor for type II membrane protein transmembrane segment at 38–58 (FAGLGGLLLLGGGALFINNAL) threads the bilayer. The tract at residues 130–144 (DVVQLPTIYRTLGQD) is interaction with ATG8. Positions 138–141 (YRTL) match the AIM motif. Residues 212-253 (NAVEAKQIAQQDAQRAAFVVDKARQEKQGMVVRAQGEAKSAE) adopt a coiled-coil conformation.

The protein belongs to the prohibitin family. As to quaternary structure, the mitochondrial prohibitin complex consists of two subunits (PHB1 and PHB2). The subunits assemble into a membrane-associated ring-shaped supercomplex of approximately 1 mDa. The mitochondrial prohibitin complex interacts with the m-AAA protease, a heterohexamer composed of YTA12/RCA1 and YTA10/AFG3. The mitochondrial prohibitin complex interacts with ATG8 and the interaction may support mitophagosome assembly. The N-terminus is blocked.

The protein resides in the mitochondrion inner membrane. Functionally, prohibitin probably acts as a holdase/unfoldase for the stabilization of newly synthesized mitochondrial proteins. Involved in mitophagy; may act as an adapter for ATG8 that supports mitophagosome assembly. Negatively regulates the proteolytic processing of ATG32 via the i-AAA protease. Acts as a negative regulator of the m-AAA protease. The protein is Prohibitin-2 (PHB2) of Saccharomyces cerevisiae (strain ATCC 204508 / S288c) (Baker's yeast).